A 35-amino-acid polypeptide reads, in one-letter code: Turgencin-B (35 aa).

M5 and M9 each carry methionine sulfoxide. 3 disulfide bridges follow: C7-C31, C11-C27, and C16-C24. G35 carries the glycine amide modification.

Post-translationally, oxidation likely reduces antimicrobial activity against Gram-positive bacteria and Gram-negative bacteria.

It localises to the secreted. Functionally, has antimicrobial activity against Gram-positive bacteria (C.glutamicum ATCC 13032 (MIC=1.6 uM) and B.subtilis ATCC 23857 (MIC=1.6 uM)) and Gram-negative bacteria (E.coli ATCC 25922 (MIC=12.5 uM) and P.aeruginosa ATCC 27853 (MIC=25.0 uM)). Displays very low activity against the Gram-positive bacteria S.aureus ATCC 9144 (MIC&gt;100 uM). The sequence is that of Turgencin-B from Synoicum turgens (Colonial ascidian).